The sequence spans 116 residues: Prefoldin subunit beta (116 aa).

This sequence belongs to the prefoldin subunit beta family. In terms of assembly, heterohexamer of two alpha and four beta subunits.

The protein localises to the cytoplasm. Molecular chaperone capable of stabilizing a range of proteins. Seems to fulfill an ATP-independent, HSP70-like function in archaeal de novo protein folding. The chain is Prefoldin subunit beta from Methanobrevibacter smithii (strain ATCC 35061 / DSM 861 / OCM 144 / PS).